We begin with the raw amino-acid sequence, 547 residues long: Mercuric reductase (547 aa).

Residues 5-70 (APTELAITGM…AVVASGYGVH (66 aa)) enclose the HMA domain. A metal cation contacts are provided by Cys-16 and Cys-19. Positions 96 and 121 each coordinate FAD. Cys-122 and Cys-127 form a disulfide bridge. Residues Lys-131, Ala-197, Asp-389, and Val-397 each coordinate FAD. Hg(2+) is bound by residues Cys-544 and Cys-545.

The protein belongs to the class-I pyridine nucleotide-disulfide oxidoreductase family. In terms of assembly, homodimer. FAD serves as cofactor.

It catalyses the reaction Hg + NADP(+) + H(+) = Hg(2+) + NADPH. In terms of biological role, resistance to Hg(2+) in bacteria appears to be governed by a specialized system which includes mercuric reductase. MerA protein is responsible for volatilizing mercury as Hg(0). The polypeptide is Mercuric reductase (merA) (Acidithiobacillus ferrooxidans (Thiobacillus ferrooxidans)).